Here is a 246-residue protein sequence, read N- to C-terminus: Phosducin (246 aa).

Acidic residues predominate over residues 1–14 (MEEAKSQSLEEDFE). The interval 1-70 (MEEAKSQSLE…GKDSKERVSR (70 aa)) is disordered. The region spanning 1 to 244 (MEEAKSQSLE…LEHTKIEEED (244 aa)) is the Phosducin domain. Basic and acidic residues predominate over residues 60-69 (NGKDSKERVS). Ser-73 is modified (phosphoserine; by PKA). Residues 111-246 (YGFVYELETG…HTKIEEEDVE (136 aa)) are thioredoxin fold.

This sequence belongs to the phosducin family. As to quaternary structure, forms a complex with the beta and gamma subunits of the GTP-binding protein, transducin. Interacts with CRX. Post-translationally, light-induced changes in cyclic nucleotide levels modulate the phosphorylation of this protein by cAMP kinase.

The protein resides in the cytoplasm. The protein localises to the cytosol. Its subcellular location is the nucleus. It localises to the cell projection. It is found in the cilium. The protein resides in the photoreceptor outer segment. The protein localises to the photoreceptor inner segment. Its function is as follows. May participate in the regulation of visual phototransduction or in the integration of photoreceptor metabolism. Inhibits the transcriptional activation activity of the cone-rod homeobox CRX. The polypeptide is Phosducin (PDC) (Homo sapiens (Human)).